The primary structure comprises 209 residues: Large ribosomal subunit protein uL3 (209 aa).

Q150 is modified (N5-methylglutamine).

The protein belongs to the universal ribosomal protein uL3 family. As to quaternary structure, part of the 50S ribosomal subunit. Forms a cluster with proteins L14 and L19. In terms of processing, methylated by PrmB.

In terms of biological role, one of the primary rRNA binding proteins, it binds directly near the 3'-end of the 23S rRNA, where it nucleates assembly of the 50S subunit. In Ectopseudomonas mendocina (strain ymp) (Pseudomonas mendocina), this protein is Large ribosomal subunit protein uL3.